The following is a 472-amino-acid chain: Endoplasmic reticulum oxidoreductin-2 (472 aa).

The N-terminal stretch at 1 to 37 (MAETDVGSVKGKEKGSGKRWILLIGAIAAVLLAVVVA) is a signal peptide. N-linked (GlcNAc...) asparagine glycosylation is present at N44. 6 disulfides stabilise this stretch: C55/C74, C57/C72, C111/C371, C120/C125, C221/C230, and C374/C377. Residues R200, T202, and W213 each contribute to the FAD site. S241 and H244 together coordinate FAD. Residue N267 is glycosylated (N-linked (GlcNAc...) asparagine). Residues R274 and R281 each contribute to the FAD site. N-linked (GlcNAc...) asparagine glycosylation is present at N364.

It belongs to the EROs family. May function both as a monomer and a homodimer. It depends on FAD as a cofactor. N-glycosylated.

The protein resides in the endoplasmic reticulum membrane. Its function is as follows. Essential oxidoreductase that oxidizes proteins in the endoplasmic reticulum to produce disulfide bonds. Acts by oxidizing directly PDI isomerase through a direct disulfide exchange. Does not act as a direct oxidant of folding substrate, but relies on PDI to transfer oxidizing equivalent. Does not oxidize all PDI related proteins, suggesting that it can discriminate between PDI and related proteins. Its reoxidation probably involves electron transfer to molecular oxygen via FAD. Acts independently of glutathione. May be responsible for a significant proportion of reactive oxygen species (ROS) in the cell, thereby being a source of oxidative stress. This Arabidopsis thaliana (Mouse-ear cress) protein is Endoplasmic reticulum oxidoreductin-2 (AERO2).